The following is a 316-amino-acid chain: uncharacterized protein (316 aa).

The disordered stretch occupies residues Met1 to Pro34. Residues Asn17–Gly26 are compositionally biased toward basic and acidic residues.

This is an uncharacterized protein from Lepidoptera (butterflies and moths).